A 500-amino-acid chain; its full sequence is Lariat debranching enzyme (500 aa).

Positions methionine 1–proline 25 are disordered. Positions 48, 50, 79, and 124 each coordinate a divalent metal cation. The tract at residues serine 164 to arginine 194 is lariat recognition loop. 3 residues coordinate a divalent metal cation: histidine 222, histidine 274, and histidine 276. The tract at residues aspartate 453–glutamate 500 is disordered. Residues aspartate 462–phenylalanine 471 are compositionally biased toward acidic residues. A compositionally biased stretch (basic and acidic residues) spans valine 472–glutamate 500.

The protein belongs to the lariat debranching enzyme family. Fe(2+) is required as a cofactor. Zn(2+) serves as cofactor. Requires Mn(2+) as cofactor.

The protein localises to the nucleus. Its activity is regulated as follows. Active in presence of diverse metals including Fe(2+), Zn(2+), Mn(2+). Binds two metal cations in two adjacent alpha and beta metal-binding pockets. Functionally, cleaves the 2'-5' phosphodiester linkage at the branch point of lariat intron pre-mRNAs after splicing and converts them into linear molecules that are subsequently degraded. It thereby facilitates ribonucleotide turnover. This chain is Lariat debranching enzyme, found in Caenorhabditis elegans.